The primary structure comprises 525 residues: MAAGEQVSNMFDTILVLDFGSQYSHLITRRLREFNIYAEMLPCTQKISELGWTPKGVILSGGPYSVYAEDAPHVDHAIFDLNVPILGICYGMQELAWINGKQVGRGDKREYGPATLKVIDDSNSLFKGMNDSTVWMSHGDKLHGLPTGYKTIATSDNSPYCGIVHETKPIYGIQFHPEVTHSTQGKTLLKNFAVDLCHAKQNWTMENFIDTEINRIRKLVGPTAEVIGAVSGGVDSTVASKLMTEAIGDRFHAILVDNGVLRLNEAANVKKTLVEGLGINLMVVDASEEFLSKLKGVTDPEKKRKIIGNTFIHVFEREAEKIKPKDGKEIQFLLQGTLYPDVIESISFKGPSQTIKTHHNVGGLLENMKLKLIEPLRELFKDEVRHLGELLGIPHDLVWRHPFPGPGIAIRVLGEVTKEQVEIARKADNIYIEEIKKAGLYNQISQAFACLLPVKSVGVMGDQRTYDQVIALRAIETTDFMTADWFPFEHSFLKKVASRIVNEVDGVARVTYDITSKPPATVEWE.

The Glutamine amidotransferase type-1 domain maps to 13-202; that stretch reads TILVLDFGSQ…AVDLCHAKQN (190 aa). Residue Cys-89 is the Nucleophile of the active site. Residues His-176 and Glu-178 contribute to the active site. Residues 203–400 enclose the GMPS ATP-PPase domain; the sequence is WTMENFIDTE…LGIPHDLVWR (198 aa). 231–237 provides a ligand contact to ATP; sequence SGGVDST. Residue Lys-241 forms a Glycyl lysine isopeptide (Lys-Gly) (interchain with G-Cter in ubiquitin) linkage. Residue Arg-304 participates in XMP binding. A Glycyl lysine isopeptide (Lys-Gly) (interchain with G-Cter in ubiquitin) cross-link involves residue Lys-426. Residues Asp-462, Lys-517, and Glu-523 each contribute to the XMP site.

In terms of assembly, homodimer. Requires Mg(2+) as cofactor.

It localises to the cytoplasm. It is found in the cytosol. It carries out the reaction XMP + L-glutamine + ATP + H2O = GMP + L-glutamate + AMP + diphosphate + 2 H(+). It participates in purine metabolism; GMP biosynthesis; GMP from XMP (L-Gln route): step 1/1. Catalyzes the conversion of xanthine monophosphate (XMP) to GMP in the presence of glutamine and ATP through an adenyl-XMP intermediate. This is GMP synthase [glutamine-hydrolyzing] from Saccharomyces cerevisiae (strain ATCC 204508 / S288c) (Baker's yeast).